The chain runs to 378 residues: tRNA N(3)-cytidine methyltransferase METTL2B (378 aa).

Position 2 is an N-acetylalanine (alanine 2). Serine 4 is modified (phosphoserine). The S-adenosyl-L-methionine site is built by tryptophan 78 and tyrosine 82. Threonine 154 carries the post-translational modification Phosphothreonine. Positions 188, 213, 239, 240, and 260 each coordinate S-adenosyl-L-methionine.

This sequence belongs to the methyltransferase superfamily. METL family. Monomer. Interacts with DALRD3.

The protein localises to the cytoplasm. The enzyme catalyses cytidine(32) in tRNA(Thr) + S-adenosyl-L-methionine = N(3)-methylcytidine(32) in tRNA(Thr) + S-adenosyl-L-homocysteine + H(+). It carries out the reaction cytidine(32) in tRNA(Arg)(CCU) + S-adenosyl-L-methionine = N(3)-methylcytidine(32) in tRNA(Arg)(CCU) + S-adenosyl-L-homocysteine + H(+). S-adenosyl-L-methionine-dependent methyltransferase that mediates N(3)-methylcytidine modification of residue 32 of the tRNA anticodon loop of tRNA(Thr)(UGU) and tRNA(Arg)(CCU). This chain is tRNA N(3)-cytidine methyltransferase METTL2B, found in Homo sapiens (Human).